A 205-amino-acid polypeptide reads, in one-letter code: MYIFQADQLSAKDTYKLLSGTVIPRPIAFVTTLSSGGAVNAAPFSFYNVVSSDPPLLSISVNRTEGRQKDTARNAVENGEFVVHVSDEAIIEDINETAASLRPDESELTRTSLHPVESKAVSVPGIKEARVRFECKLERHITFDNDQGITTADLLIGRVVCFHLDEKVYDAEKGYILTDELKPASRLAGNHYAKLGEEFTLIRPS.

The protein belongs to the flavoredoxin family. It depends on FMN as a cofactor.

This is an uncharacterized protein from Bacillus subtilis (strain 168).